The chain runs to 115 residues: MKFELLFGVLLVTLFSYSSAEMLDDFDQADEDELLSLIEKEEARAKECTPRFYDCSHDRHSCCRSELFKDVCTCFYPEGGDNEVCTCQQPKHLKYMEKAAGKAKKFGGKIKKWFG.

The signal sequence occupies residues 1-20 (MKFELLFGVLLVTLFSYSSA). Residues 21-44 (EMLDDFDQADEDELLSLIEKEEAR) constitute a propeptide that is removed on maturation. Intrachain disulfides connect cysteine 48–cysteine 63, cysteine 55–cysteine 72, cysteine 62–cysteine 87, and cysteine 74–cysteine 85.

This sequence belongs to the neurotoxin 19 (CSTX) family. 01 subfamily. In terms of tissue distribution, expressed by the venom gland.

The protein localises to the secreted. This is U3-lycotoxin-Ls1k from Lycosa singoriensis (Wolf spider).